A 61-amino-acid chain; its full sequence is DNA-directed RNA polymerase subunit Rpo6 (61 aa).

It belongs to the archaeal Rpo6/eukaryotic RPB6 RNA polymerase subunit family. As to quaternary structure, part of the RNA polymerase complex.

It is found in the cytoplasm. The catalysed reaction is RNA(n) + a ribonucleoside 5'-triphosphate = RNA(n+1) + diphosphate. DNA-dependent RNA polymerase (RNAP) catalyzes the transcription of DNA into RNA using the four ribonucleoside triphosphates as substrates. The protein is DNA-directed RNA polymerase subunit Rpo6 of Thermoplasma volcanium (strain ATCC 51530 / DSM 4299 / JCM 9571 / NBRC 15438 / GSS1).